A 43-amino-acid polypeptide reads, in one-letter code: MTTKFVFDLLAPDDILHPFNHVKLIIRPIEVEHIIIATTMPAV.

The protein belongs to the coronaviruses ns4.9 protein family.

In Bovine coronavirus (strain Mebus) (BCoV), this protein is Non-structural protein of 4.9 kDa.